Consider the following 329-residue polypeptide: GDP-mannose transporter (329 aa).

Residues 1–11 lie on the Cytoplasmic side of the membrane; sequence MADKGSVAAKS. Residues 12–32 form a helical membrane-spanning segment; sequence LTNSAPLSIFSYCAASILMTV. Residues 33–40 are Lumenal-facing; it reads TNKYAVSG. A helical transmembrane segment spans residues 41–61; the sequence is VDFNFNFFLLAVQGIVCITLI. The Cytoplasmic portion of the chain corresponds to 62–83; the sequence is SSLKQLNVITFREFNKVEAKKW. The chain crosses the membrane as a helical span at residues 84–104; the sequence is FPIAVLLVVMIYTSSKALQYL. The Lumenal segment spans residues 105 to 107; that stretch reads SIP. A helical membrane pass occupies residues 108-128; it reads IYTIFKNLTIILIAYGEVIWF. Over 129–131 the chain is Cytoplasmic; sequence GGR. Residues 132–152 traverse the membrane as a helical segment; that stretch reads VTNLALGSFVLMVLSSAVASY. Topologically, residues 153 to 163 are lumenal; sequence GDSNVDTGKLN. A helical membrane pass occupies residues 164–184; it reads FNIGYFWMFTNCFSSAAFVLF. Residues 185–196 lie on the Cytoplasmic side of the membrane; sequence MRKRIKLTNFKD. The helical transmembrane segment at 197–217 threads the bilayer; it reads FDTMYYNNLLSIPILLFASLT. Residues 218-237 are Lumenal-facing; the sequence is TEDWSAKNIAQNFPEDTKYA. Residues 238-258 traverse the membrane as a helical segment; the sequence is VIASMIISGMSAVGISYTSAW. Residues 259–266 are Cytoplasmic-facing; sequence CVRVTSST. Residues 267–287 form a helical membrane-spanning segment; that stretch reads TYSMVGALNKLPIALSGLLFF. Residues 288–290 lie on the Lumenal side of the membrane; sequence KAP. Residues 291-311 form a helical membrane-spanning segment; the sequence is INFYSISSIFIGFAAGLVYAI. Residues 312-329 are Cytoplasmic-facing; that stretch reads AKQKQKKEDELQLPTDKS.

Belongs to the TPT transporter family. SLC35D subfamily. In terms of assembly, homooligomer.

The protein resides in the golgi apparatus membrane. The protein localises to the cytoplasmic vesicle membrane. Its subcellular location is the endoplasmic reticulum membrane. In terms of biological role, involved in the import of GDP-mannose from the cytoplasm into the Golgi lumen. The chain is GDP-mannose transporter (VIG4) from Komagataella pastoris (Yeast).